Reading from the N-terminus, the 76-residue chain is MAQPDSSGLAEVLDRVLDKGVVVDVWARVSLVGIEILTVEARVVAASVDTFLHYAEEIAKIEQAELTAGAEAAPEA.

Binds to GvpF1 stretches follow at residues 1 to 22 (MAQP…KGVV) and 2 to 43 (AQPD…EARV). Residues 9 to 19 (LAEVLDRVLDK) form an alpha helix 1 region. Residues 23-31 (VDVWARVSL) form a beta-strand 1 region. The segment at 32–34 (VGI) is beta turn. A beta-strand 2 region spans residues 35–43 (EILTVEARV). Positions 48–67 (VDTFLHYAEEIAKIEQAELT) are alpha helix 2.

Belongs to the gas vesicle GvpA family. In terms of assembly, major component of the gas vesicle shell which is 2 nm thick and consists of a single layer of the protein. It forms 4.6 nm-wide ribs nearly perpendicular to the long axis of the vesicle. Modeled as antiparallel homodimers. The ribs form a low-pitch helix rather than a stack of hoops. Interacts with GvpF1 via its N-terminus (residues 1-43) in early growth stages, none of the other GvpG1 to GvpM1 proteins were seen to directly bind GvpA1 in H.volcanii experiments. Might interact with GvpJ1. Might interact with GvpG1, GvpH1, GvpJ1, GvpM1, GvpN1 and GvpO1.

The protein resides in the gas vesicle shell. Its function is as follows. Gas vesicles are hollow, gas filled proteinaceous nanostructures found in several microbial planktonic microorganisms. They allow positioning of halobacteria at the optimal depth for growth in the poorly aerated shallow brine pools of their habitat. GvpA forms the protein shell. The critical collapse pressure (CCP) of p-vac gas vesicles is 0.66 MPa; mutating residues in p-gvpA to those found in c-gvpA increases the CCP. These residues partially and independently control the width and strength of gas vesicles. In stationary phase gas vesicles, about 30 times more GvpA1 is found than GvpA2. Expression of a 9.5 kb p-vac DNA fragment containing 2 divergently transcribed regions (gvpD-gvpE-gvpF-gvpG-gvpH-gvpI-gvpJ-gvpK-gvpL-gvpM and gvpA-gvpC-gvpN-gvpO) allows H.volcanii to produce gas vesicles. All site-directed mutagenesis is tested in H.volcanii. A minimal gas vesicle can be made in H.volcanii by gvpA1-gvpO1 plus gvpF1-gvpG1-gvpJ1-gvpK1-gvpL1-gvpM1; lack of enough GvpJ1 prevents their formation. A similar region restores gas vesicle production in H.halobium without the p-vac locus, but it still has the c-vac locus. The chain is Gas vesicle protein A1 from Halobacterium salinarum (strain ATCC 700922 / JCM 11081 / NRC-1) (Halobacterium halobium).